Consider the following 88-residue polypeptide: HssA/B-like protein 61 (88 aa).

It belongs to the hssA/B family.

The chain is HssA/B-like protein 61 (hssl61) from Dictyostelium discoideum (Social amoeba).